Here is a 434-residue protein sequence, read N- to C-terminus: CC-adding tRNA nucleotidyltransferase (434 aa).

Residue 19–22 (GAVR) participates in CTP binding. Mg(2+) contacts are provided by Asp-32 and Asp-34. CTP is bound by residues 90-91 (RD), Asn-95, 130-139 (DHLRSLRGVR), and Arg-175.

This sequence belongs to the tRNA nucleotidyltransferase/poly(A) polymerase family. It depends on Mg(2+) as a cofactor.

It carries out the reaction a tRNA precursor + 2 CTP = a tRNA with a 3' CC end + 2 diphosphate. TRNA nucleotidyltransferase involved in the synthesis of the tRNA CCA terminus. Adds the two cytidine residues to tRNA. The sequence is that of CC-adding tRNA nucleotidyltransferase from Thermus thermophilus (strain ATCC BAA-163 / DSM 7039 / HB27).